Consider the following 478-residue polypeptide: Glycogen synthase (478 aa).

Lys15 is a binding site for ADP-alpha-D-glucose.

The protein belongs to the glycosyltransferase 1 family. Bacterial/plant glycogen synthase subfamily.

The enzyme catalyses [(1-&gt;4)-alpha-D-glucosyl](n) + ADP-alpha-D-glucose = [(1-&gt;4)-alpha-D-glucosyl](n+1) + ADP + H(+). The protein operates within glycan biosynthesis; glycogen biosynthesis. Synthesizes alpha-1,4-glucan chains using ADP-glucose. In Actinobacillus pleuropneumoniae serotype 5b (strain L20), this protein is Glycogen synthase.